A 589-amino-acid polypeptide reads, in one-letter code: Kelch-like protein 25 (589 aa).

A BTB domain is found at Thr-46–Glu-114. A BACK domain is found at Cys-149–Val-250. Kelch repeat units lie at residues Thr-296 to Cys-340, Lys-341 to Asn-388, Cys-389 to Leu-444, Leu-446 to Ser-492, Ile-494 to Asn-538, and Lys-539 to Lys-585.

As to quaternary structure, component of the BCR(KLHL25) E3 ubiquitin ligase complex, at least composed of CUL3, KLHL25 and RBX1.

The protein operates within protein modification; protein ubiquitination. Functionally, substrate-specific adapter of a BCR (BTB-CUL3-RBX1) E3 ubiquitin ligase complex involved in various processes, such as translation homeostasis and lipid synthesis. The BCR(KLHL25) ubiquitin ligase complex acts by mediating ubiquitination of hypophosphorylated EIF4EBP1 (4E-BP1): ubiquitination and subsequent degradation of hypophosphorylated EIF4EBP1 (4E-BP1) probably serves as a homeostatic mechanism to maintain translation and prevent eIF4E inhibition when eIF4E levels are low. The BCR(KLHL25) complex does not target EIF4EBP1 (4E-BP1) when it is hyperphosphorylated or associated with eIF4E. The BCR(KLHL25) complex also acts as a regulator of lipid synthesis by mediating ubiquitination and degradation of ACLY, thereby inhibiting lipid synthesis. BCR(KLHL25)-mediated degradation of ACLY promotes fatty acid oxidation and is required for differentiation of inducible regulatory T (iTreg) cells. This chain is Kelch-like protein 25, found in Homo sapiens (Human).